The sequence spans 137 residues: MLVPKRVKHRREFRGKMRGEAKGGKQVDFGQYGLQATTSSWITNRQIEAARIAMTRYMKRGGKVWIKIFPHKSYTAKAIGVRMGSGKGAPEGWVAPVKRGKVMFEVAGVSEEIAREAFRLAGHKLPVKVKFVKREAE.

It belongs to the universal ribosomal protein uL16 family. Part of the 50S ribosomal subunit.

Its function is as follows. Binds 23S rRNA and is also seen to make contacts with the A and possibly P site tRNAs. The protein is Large ribosomal subunit protein uL16 of Streptococcus suis (strain 98HAH33).